Reading from the N-terminus, the 500-residue chain is Glycerol kinase (500 aa).

T13 is a binding site for ADP. ATP contacts are provided by T13, T14, and S15. T13 contributes to the sn-glycerol 3-phosphate binding site. R17 contacts ADP. Sn-glycerol 3-phosphate contacts are provided by R83, E84, Y135, and D245. Positions 83, 84, 135, 245, and 246 each coordinate glycerol. ADP is bound by residues T267 and G310. ATP is bound by residues T267, G310, Q314, and G411. 2 residues coordinate ADP: G411 and N415.

It belongs to the FGGY kinase family. Homotetramer and homodimer (in equilibrium).

The enzyme catalyses glycerol + ATP = sn-glycerol 3-phosphate + ADP + H(+). It participates in polyol metabolism; glycerol degradation via glycerol kinase pathway; sn-glycerol 3-phosphate from glycerol: step 1/1. Activated by phosphorylation and inhibited by fructose 1,6-bisphosphate (FBP). In terms of biological role, key enzyme in the regulation of glycerol uptake and metabolism. Catalyzes the phosphorylation of glycerol to yield sn-glycerol 3-phosphate. The chain is Glycerol kinase from Lactobacillus acidophilus (strain ATCC 700396 / NCK56 / N2 / NCFM).